Reading from the N-terminus, the 331-residue chain is Laforin (331 aa).

The 124-residue stretch at 1–124 folds into the CBM20 domain; sequence MRFRFGVVVP…NNLVDGVYCL (124 aa). S25 is modified (phosphoserine; by AMPK). Substrate contacts are provided by residues W32, K87, 103–107, D197, D235, and R241; that span reads GPHHD. The Tyrosine-protein phosphatase domain occupies 156-323; that stretch reads HYSRILPNIW…QEDFFQKFGK (168 aa). C266 functions as the Phosphocysteine intermediate in the catalytic mechanism. The Glucan phosphatase signature motif CXAGXGR motif lies at 266-272; the sequence is CNAGVGR. Substrate is bound by residues 267–272 and Y304; that span reads NAGVGR.

The protein belongs to the protein-tyrosine phosphatase family. As to quaternary structure, homodimer. Interacts with itself. Interacts with PPP1R3B, PPP1R3C, PPP1R3D, HIRIP5, and EPM2AIP1. Binds glycogen and Lafora bodies. Interacts with NHLRC1/malin (via the NHL repeats). Forms a complex with NHLRC1/malin and HSP70. Interacts with PPP1R3D; in the presence of NHLC1/malin the interaction leads to ubiquitination and autophagic degradation of PPP1R3D. Interacts (via the phosphatase domain) with MAPT/Tau; the interaction dephosphorylates MAPT. Isoform 1 and isoform 2 interact to form a heterodimeric complex that lacks phosphatase activity (in vitro). Active phosphatase isoform 7 and isoform 1 interact with each other, but give rise to lower phosphatase activity than isoform 1 or isoform 7 by themselves (in vitro). Active phosphatase isoform 7 and inactive isoform 2 interact with each other, but give rise to lower phosphatase activity than isoform 7 by itself (in vitro). Interacts with PRDM8. Polyubiquitinated by NHLRC1/malin. Post-translationally, phosphorylation on Ser-25 by AMPK affects the phosphatase activity of the enzyme and its ability to homodimerize and interact with NHLRC1, PPP1R3C or PRKAA2. As to expression, expressed in heart, skeletal muscle, kidney, pancreas and brain. Isoform 4 is also expressed in the placenta.

It is found in the cytoplasm. Its subcellular location is the endoplasmic reticulum membrane. The protein localises to the cell membrane. It localises to the nucleus. The enzyme catalyses O-phospho-L-tyrosyl-[protein] + H2O = L-tyrosyl-[protein] + phosphate. It catalyses the reaction O-phospho-L-seryl-[protein] + H2O = L-seryl-[protein] + phosphate. The catalysed reaction is O-phospho-L-threonyl-[protein] + H2O = L-threonyl-[protein] + phosphate. Plays an important role in preventing glycogen hyperphosphorylation and the formation of insoluble aggregates, via its activity as glycogen phosphatase, and by promoting the ubiquitination of proteins involved in glycogen metabolism via its interaction with the E3 ubiquitin ligase NHLRC1/malin. Shows strong phosphatase activity towards complex carbohydrates in vitro, avoiding glycogen hyperphosphorylation which is associated with reduced branching and formation of insoluble aggregates. Dephosphorylates phosphotyrosine and synthetic substrates, such as para-nitrophenylphosphate (pNPP), and has low activity with phosphoserine and phosphothreonine substrates (in vitro). Has been shown to dephosphorylate MAPT. Forms a complex with NHLRC1/malin and HSP70, which suppresses the cellular toxicity of misfolded proteins by promoting their degradation through the ubiquitin-proteasome system (UPS). Acts as a scaffold protein to facilitate PPP1R3C/PTG ubiquitination by NHLRC1/malin. Also promotes proteasome-independent protein degradation through the macroautophagy pathway. Functionally, does not bind to glycogen. Lacks phosphatase activity and might function as a dominant-negative regulator for the phosphatase activity of isoform 1 and isoform 7. Its function is as follows. Has phosphatase activity (in vitro). The polypeptide is Laforin (EPM2A) (Homo sapiens (Human)).